Here is a 210-residue protein sequence, read N- to C-terminus: N-(5'-phosphoribosyl)anthranilate isomerase (210 aa).

The protein belongs to the TrpF family.

It carries out the reaction N-(5-phospho-beta-D-ribosyl)anthranilate = 1-(2-carboxyphenylamino)-1-deoxy-D-ribulose 5-phosphate. The protein operates within amino-acid biosynthesis; L-tryptophan biosynthesis; L-tryptophan from chorismate: step 3/5. The chain is N-(5'-phosphoribosyl)anthranilate isomerase from Methanococcus aeolicus (strain ATCC BAA-1280 / DSM 17508 / OCM 812 / Nankai-3).